Reading from the N-terminus, the 249-residue chain is Triosephosphate isomerase (249 aa).

Residue 9 to 11 (NWK) participates in substrate binding. His-95 acts as the Electrophile in catalysis. Glu-166 (proton acceptor) is an active-site residue. Residues Gly-172, Ser-211, and 232 to 233 (GG) each bind substrate.

The protein belongs to the triosephosphate isomerase family. In terms of assembly, homodimer.

It localises to the cytoplasm. It carries out the reaction D-glyceraldehyde 3-phosphate = dihydroxyacetone phosphate. It participates in carbohydrate biosynthesis; gluconeogenesis. The protein operates within carbohydrate degradation; glycolysis; D-glyceraldehyde 3-phosphate from glycerone phosphate: step 1/1. Involved in the gluconeogenesis. Catalyzes stereospecifically the conversion of dihydroxyacetone phosphate (DHAP) to D-glyceraldehyde-3-phosphate (G3P). The chain is Triosephosphate isomerase from Legionella pneumophila (strain Paris).